The following is a 1196-amino-acid chain: uncharacterized protein (1196 aa).

Residues 27–47 (ILLLLGSFILLNVWINVVTLL) form a helical membrane-spanning segment. Disordered stretches follow at residues 150–345 (GGGE…PQAH), 367–402 (SSVPVPTSAPAPPGTLAPATTPVLAPTPAPVPASAP), 669–762 (TQDS…QKNT), 775–806 (CLTQSPGLHKKTPFTQTSDLQRSSGFTQDSGI), 826–877 (QATD…QDSE), 960–1009 (YRSS…GPYK), and 1168–1196 (KCEALSPRRLHQEAPSNSGKPSRSGDIRM). Polar residues predominate over residues 157 to 177 (VTASKAQASLLSRPETSSQFP). Composition is skewed to low complexity over residues 212–227 (HSPTHTPVCTPTHPWT) and 253–279 (THSQAQDTSAQAQAHTSAPTPAQTPAH). Positions 299-321 (HTSAQAQTHSPPHTPEYTHSQAH) are enriched in polar residues. Over residues 391-402 (APTPAPVPASAP) the composition is skewed to pro residues. Polar residues-rich tracts occupy residues 733–742 (YLCQNPSPSQ), 750–762 (SGITQDSHPQKNT), 787–804 (PFTQTSDLQRSSGFTQDS), and 826–849 (QATDHQKNLGSSKDSGGHKNTGNV). Residues 962-971 (SSEHSQDSNL) are compositionally biased toward basic and acidic residues.

The protein resides in the membrane. This is an uncharacterized protein from Homo sapiens (Human).